The chain runs to 189 residues: Elongation factor P (189 aa).

The protein belongs to the elongation factor P family.

It is found in the cytoplasm. It participates in protein biosynthesis; polypeptide chain elongation. Its function is as follows. Involved in peptide bond synthesis. Stimulates efficient translation and peptide-bond synthesis on native or reconstituted 70S ribosomes in vitro. Probably functions indirectly by altering the affinity of the ribosome for aminoacyl-tRNA, thus increasing their reactivity as acceptors for peptidyl transferase. The chain is Elongation factor P from Chloroflexus aurantiacus (strain ATCC 29364 / DSM 637 / Y-400-fl).